The chain runs to 435 residues: Transcription factor tau 55 kDa subunit (435 aa).

The disordered stretch occupies residues 362–417 (GLLSPTEENETTNAGQSKGSSTANDPNIQIQEEDVGLPDSTNTSRDHTGDKEEVQS). Residue S365 is modified to Phosphoserine. The span at 372 to 391 (TTNAGQSKGSSTANDPNIQI) shows a compositional bias: polar residues. A compositionally biased stretch (basic and acidic residues) spans 405–417 (SRDHTGDKEEVQS).

Component of the TFIIIC complex composed of TFC1, TFC3, TFC4, TFC6, TFC7 and TFC8. The subunits are organized in two globular domains, tauA and tauB, connected by a proteolysis-sensitive and flexible linker.

The protein resides in the nucleus. In terms of biological role, TFIIIC mediates tRNA and 5S RNA gene activation by binding to intragenic promoter elements. Upstream of the transcription start site, TFIIIC assembles the initiation complex TFIIIB-TFIIIC-tDNA, which is sufficient for RNA polymerase III recruitment and function. Part of the tauA domain of TFIIIC that binds boxA DNA promoter sites of tRNA and similar genes. This is Transcription factor tau 55 kDa subunit (TFC7) from Saccharomyces cerevisiae (strain ATCC 204508 / S288c) (Baker's yeast).